A 119-amino-acid polypeptide reads, in one-letter code: uncharacterized protein (119 aa).

2 consecutive transmembrane segments (helical) span residues 19 to 39 (FYPS…PSFL) and 68 to 88 (FPWF…PWLL).

It localises to the membrane. This is an uncharacterized protein from Saccharomyces cerevisiae (strain ATCC 204508 / S288c) (Baker's yeast).